Consider the following 786-residue polypeptide: Endonuclease MutS2 (786 aa).

332-339 contributes to the ATP binding site; it reads GPNTGGKT. A Smr domain is found at 710-785; that stretch reads VDLRGLDAEE…GDGVTMVELK (76 aa).

This sequence belongs to the DNA mismatch repair MutS family. MutS2 subfamily. As to quaternary structure, homodimer. Binds to stalled ribosomes, contacting rRNA.

Functionally, endonuclease that is involved in the suppression of homologous recombination and thus may have a key role in the control of bacterial genetic diversity. Acts as a ribosome collision sensor, splitting the ribosome into its 2 subunits. Detects stalled/collided 70S ribosomes which it binds and splits by an ATP-hydrolysis driven conformational change. Acts upstream of the ribosome quality control system (RQC), a ribosome-associated complex that mediates the extraction of incompletely synthesized nascent chains from stalled ribosomes and their subsequent degradation. Probably generates substrates for RQC. The sequence is that of Endonuclease MutS2 from Clostridium beijerinckii (strain ATCC 51743 / NCIMB 8052) (Clostridium acetobutylicum).